A 449-amino-acid polypeptide reads, in one-letter code: Na(+)-translocating NADH-quinone reductase subunit A (449 aa).

The protein belongs to the NqrA family. In terms of assembly, composed of six subunits; NqrA, NqrB, NqrC, NqrD, NqrE and NqrF.

It catalyses the reaction a ubiquinone + n Na(+)(in) + NADH + H(+) = a ubiquinol + n Na(+)(out) + NAD(+). Its function is as follows. NQR complex catalyzes the reduction of ubiquinone-1 to ubiquinol by two successive reactions, coupled with the transport of Na(+) ions from the cytoplasm to the periplasm. NqrA to NqrE are probably involved in the second step, the conversion of ubisemiquinone to ubiquinol. The chain is Na(+)-translocating NADH-quinone reductase subunit A from Actinobacillus pleuropneumoniae serotype 3 (strain JL03).